A 100-amino-acid chain; its full sequence is Large ribosomal subunit protein bL21 (100 aa).

This sequence belongs to the bacterial ribosomal protein bL21 family. As to quaternary structure, part of the 50S ribosomal subunit. Contacts protein L20.

Functionally, this protein binds to 23S rRNA in the presence of protein L20. This chain is Large ribosomal subunit protein bL21, found in Wolbachia pipientis wMel.